The sequence spans 310 residues: tRNA dimethylallyltransferase (310 aa).

19–26 lines the ATP pocket; that stretch reads GPTGTGKS. 21–26 serves as a coordination point for substrate; the sequence is TGTGKS.

The protein belongs to the IPP transferase family. As to quaternary structure, monomer. The cofactor is Mg(2+).

The catalysed reaction is adenosine(37) in tRNA + dimethylallyl diphosphate = N(6)-dimethylallyladenosine(37) in tRNA + diphosphate. Catalyzes the transfer of a dimethylallyl group onto the adenine at position 37 in tRNAs that read codons beginning with uridine, leading to the formation of N6-(dimethylallyl)adenosine (i(6)A). The polypeptide is tRNA dimethylallyltransferase (Saccharopolyspora erythraea (strain ATCC 11635 / DSM 40517 / JCM 4748 / NBRC 13426 / NCIMB 8594 / NRRL 2338)).